The primary structure comprises 561 residues: DNA ligase B (561 aa).

Lysine 128 (N6-AMP-lysine intermediate) is an active-site residue.

It belongs to the NAD-dependent DNA ligase family. LigB subfamily.

The enzyme catalyses NAD(+) + (deoxyribonucleotide)n-3'-hydroxyl + 5'-phospho-(deoxyribonucleotide)m = (deoxyribonucleotide)n+m + AMP + beta-nicotinamide D-nucleotide.. Catalyzes the formation of phosphodiester linkages between 5'-phosphoryl and 3'-hydroxyl groups in double-stranded DNA using NAD as a coenzyme and as the energy source for the reaction. In Pseudomonas syringae pv. syringae (strain B728a), this protein is DNA ligase B.